Consider the following 161-residue polypeptide: Regulator of ribonuclease activity A (161 aa).

The protein belongs to the RraA family. As to quaternary structure, homotrimer. Binds to both RNA-binding sites in the C-terminal region of Rne and to RhlB.

The protein resides in the cytoplasm. Globally modulates RNA abundance by binding to RNase E (Rne) and regulating its endonucleolytic activity. Can modulate Rne action in a substrate-dependent manner by altering the composition of the degradosome. Modulates RNA-binding and helicase activities of the degradosome. The polypeptide is Regulator of ribonuclease activity A (Shigella flexneri serotype 5b (strain 8401)).